The primary structure comprises 248 residues: Segregation and condensation protein A (248 aa).

The protein belongs to the ScpA family. As to quaternary structure, component of a cohesin-like complex composed of ScpA, ScpB and the Smc homodimer, in which ScpA and ScpB bind to the head domain of Smc. The presence of the three proteins is required for the association of the complex with DNA.

It is found in the cytoplasm. Its function is as follows. Participates in chromosomal partition during cell division. May act via the formation of a condensin-like complex containing Smc and ScpB that pull DNA away from mid-cell into both cell halves. The protein is Segregation and condensation protein A of Clostridium perfringens (strain SM101 / Type A).